Here is a 23-residue protein sequence, read N- to C-terminus: Hemocyanin subunit 1 (23 aa).

Residues 1–23 form a disordered region; sequence DSPGGASDTQKQHXVNSXXXKXY.

The protein belongs to the tyrosinase family. Hemocyanin subfamily. Hemolymph.

It localises to the secreted. The protein resides in the extracellular space. In terms of biological role, hemocyanins are copper-containing oxygen carriers occurring freely dissolved in the hemolymph of many mollusks and arthropods. The protein is Hemocyanin subunit 1 of Cancer pagurus (Rock crab).